We begin with the raw amino-acid sequence, 441 residues long: Lysine histidine transporter 2 (441 aa).

The Cytoplasmic portion of the chain corresponds to 1-32; sequence MGNSEMSASEVAAAKQKNVDDWLPITSSRNAK. Residues 33 to 53 traverse the membrane as a helical segment; sequence WWYSAFHNVTAMVGAGVLSLP. At 54 to 58 the chain is on the extracellular side; sequence YAMSN. A helical membrane pass occupies residues 59–79; sequence LGWGPGVTIMVMSWIITLYTL. At 80-110 the chain is on the cytoplasmic side; the sequence is WQMVEMHEIVPGKRLDRYHELGQHAFGEKLG. Residues 111-131 traverse the membrane as a helical segment; sequence LWIVVPQQLIVEVGVDIVYMV. Over 132–152 the chain is Extracellular; that stretch reads TGGASLKKVHQLVCPDCKEIR. The chain crosses the membrane as a helical span at residues 153–173; sequence TTFWIMIFASVHFVISHLPNF. Residues 174–175 are Cytoplasmic-facing; it reads NS. A helical transmembrane segment spans residues 176–196; sequence ISIISLAAAVMSLTYSTIAWA. Residues 197–222 lie on the Extracellular side of the membrane; sequence ASVHKGVHPDVDYSPRASTDVGKVFN. A helical membrane pass occupies residues 223-243; it reads FLNALGDVAFAYAGHNVVLEI. Over 244 to 263 the chain is Cytoplasmic; that stretch reads QATIPSTPEMPSKVPMWRGV. The helical transmembrane segment at 264-284 threads the bilayer; it reads IVAYIVVAICYFPVAFLGYYI. The Extracellular segment spans residues 285 to 300; that stretch reads FGNSVDDNILITLEKP. Residues 301–321 form a helical membrane-spanning segment; sequence IWLIAMANMFVVIHVIGSYQI. Residues 322–347 are Cytoplasmic-facing; sequence FAMPVFDMLETVLVKKMNFNPSFKLR. Residues 348–370 traverse the membrane as a helical segment; sequence FITRSLYVAFTMIVAICVPFFGG. Topologically, residues 371–373 are extracellular; the sequence is LLG. Residues 374–396 traverse the membrane as a helical segment; it reads FFGGFAFAPTTYYLPCIMWLVLK. The Cytoplasmic portion of the chain corresponds to 397–406; it reads KPKRFGLSWT. The helical transmembrane segment at 407–427 threads the bilayer; it reads ANWFCIIVGVLLTILAPIGGL. Topologically, residues 428–441 are extracellular; the sequence is RTIIINAKTYKFFS.

Belongs to the amino acid/polyamine transporter 2 family. Amino acid/auxin permease (AAAP) (TC 2.A.18.2) subfamily. As to expression, expressed in flower buds and to lower levels in leaves and stems. Not detected in roots and siliques. Restricted to the tapetum cell layer.

It is found in the cell membrane. With respect to regulation, inhibited by diethylstibestrol (DES), 2,4-dinitrophenol (DNP) and carbonlycyanide m-chlorophenylhydrazone (CCCP). Functionally, amino acid-proton symporter. Transporter with a broad specificity for neutral and acidic amino acids. Basic amino acids are only marginally transported. Involved in import of amino acids into the tapetum cells for synthesis of compounds important for microspore structure. The sequence is that of Lysine histidine transporter 2 (LHT2) from Arabidopsis thaliana (Mouse-ear cress).